The primary structure comprises 387 residues: Chorismate synthase (387 aa).

NADP(+) contacts are provided by arginine 42 and arginine 48. Residues arginine 131–serine 133, glutamine 251–alanine 252, glycine 295, lysine 310–threonine 314, and arginine 336 contribute to the FMN site.

Belongs to the chorismate synthase family. As to quaternary structure, homotetramer. FMNH2 serves as cofactor.

The catalysed reaction is 5-O-(1-carboxyvinyl)-3-phosphoshikimate = chorismate + phosphate. The protein operates within metabolic intermediate biosynthesis; chorismate biosynthesis; chorismate from D-erythrose 4-phosphate and phosphoenolpyruvate: step 7/7. Its function is as follows. Catalyzes the anti-1,4-elimination of the C-3 phosphate and the C-6 proR hydrogen from 5-enolpyruvylshikimate-3-phosphate (EPSP) to yield chorismate, which is the branch point compound that serves as the starting substrate for the three terminal pathways of aromatic amino acid biosynthesis. This reaction introduces a second double bond into the aromatic ring system. The polypeptide is Chorismate synthase (Syntrophotalea carbinolica (strain DSM 2380 / NBRC 103641 / GraBd1) (Pelobacter carbinolicus)).